Reading from the N-terminus, the 128-residue chain is Histone H2A (128 aa).

This sequence belongs to the histone H2A family. The nucleosome is a histone octamer containing two molecules each of H2A, H2B, H3 and H4 assembled in one H3-H4 heterotetramer and two H2A-H2B heterodimers. The octamer wraps approximately 147 bp of DNA.

It localises to the nucleus. Its subcellular location is the chromosome. Core component of nucleosome. Nucleosomes wrap and compact DNA into chromatin, limiting DNA accessibility to the cellular machineries which require DNA as a template. Histones thereby play a central role in transcription regulation, DNA repair, DNA replication and chromosomal stability. DNA accessibility is regulated via a complex set of post-translational modifications of histones, also called histone code, and nucleosome remodeling. The polypeptide is Histone H2A (HTA1) (Encephalitozoon cuniculi (strain GB-M1) (Microsporidian parasite)).